Reading from the N-terminus, the 158-residue chain is Endoribonuclease YbeY (158 aa).

Zn(2+) is bound by residues H121, H125, and H131.

The protein belongs to the endoribonuclease YbeY family. It depends on Zn(2+) as a cofactor.

Its subcellular location is the cytoplasm. Its function is as follows. Single strand-specific metallo-endoribonuclease involved in late-stage 70S ribosome quality control and in maturation of the 3' terminus of the 16S rRNA. This is Endoribonuclease YbeY from Exiguobacterium sibiricum (strain DSM 17290 / CCUG 55495 / CIP 109462 / JCM 13490 / 255-15).